A 350-amino-acid chain; its full sequence is Protein XRP2 (350 aa).

Residues 1-10 are compositionally biased toward basic residues; that stretch reads MGCFFSKRRK. Residues 1 to 31 form a disordered region; sequence MGCFFSKRRKADKESRPENEEERPKQYSWDQ. Glycine 2 carries N-myristoyl glycine lipidation. Residue cysteine 3 is the site of S-palmitoyl cysteine attachment. A compositionally biased stretch (basic and acidic residues) spans 11–31; it reads ADKESRPENEEERPKQYSWDQ. Residues 24 to 179 form the C-CAP/cofactor C-like domain; sequence PKQYSWDQRE…TWSNIHDFTP (156 aa). Residues 98–99 and 115–118 each bind GTP; these read GS and QQFR.

The protein belongs to the TBCC family. Found in a complex with ARL3, RP2 and UNC119 (or UNC119B); RP2 induces hydrolysis of GTP ARL3 in the complex, leading to the release of UNC119 (or UNC119B). Interacts with ARL3; interaction is direct and stimulated with the activated GTP-bound form of ARL3. Myristoylated on Gly-2; which may be required for membrane targeting. Post-translationally, palmitoylated on Cys-3; which may be required for plasma membrane targeting. Mutation of Cys-3 targets the protein to internal membranes. Ubiquitous. Expressed in the rod and cone photoreceptors, extending from the tips of the outer segment (OS) through the inner segment (IS) and outer nuclear layer (ONL) and into the synaptic terminals of the outer plexiform layer (ONL). Also detected in the bipolar, horizontal and amacrine cells in the inner nuclear layer (INL), extending to the inner plexiform layer (IPL) and though the ganglion cell layer (GCL) and into the nerve fiber layer (NFL) (at protein level).

Its subcellular location is the cell membrane. It localises to the cell projection. It is found in the cilium. Acts as a GTPase-activating protein (GAP) involved in trafficking between the Golgi and the ciliary membrane. Involved in localization of proteins, such as NPHP3, to the cilium membrane by inducing hydrolysis of GTP ARL3, leading to the release of UNC119 (or UNC119B). Acts as a GTPase-activating protein (GAP) for tubulin in concert with tubulin-specific chaperone C, but does not enhance tubulin heterodimerization. Acts as a guanine nucleotide dissociation inhibitor towards ADP-ribosylation factor-like proteins. The polypeptide is Protein XRP2 (RP2) (Homo sapiens (Human)).